The following is a 190-amino-acid chain: Histone-arginine methyltransferase METTL23 (190 aa).

Belongs to the methyltransferase superfamily. METTL23 family. As to quaternary structure, interacts with HSPA5, HSP90B1, TUBULIN, UGGT1 and UGGT2. Interacts with TET3. Interacts with STPG4.

It localises to the nucleus. The protein resides in the cytoplasm. It carries out the reaction L-arginyl-[protein] + 2 S-adenosyl-L-methionine = N(omega),N(omega)-dimethyl-L-arginyl-[protein] + 2 S-adenosyl-L-homocysteine + 2 H(+). Its function is as follows. Histone methyltransferase that dimethylates histone H3 at 'Arg-17', forming asymmetric dimethylarginine (H3R17me2a), leading to activate transcription via chromatin remodeling. Maternal factor involved in epigenetic chromatin reprogramming of the paternal genome in the zygote: mediates H3R17me2a, promoting histone H3.3 incorporation in the male pronucleus, leading to TET3 recruitment and subsequent DNA demethylation. The sequence is that of Histone-arginine methyltransferase METTL23 from Homo sapiens (Human).